The primary structure comprises 263 residues: 3-methyl-2-oxobutanoate hydroxymethyltransferase (263 aa).

Asp45 and Asp84 together coordinate Mg(2+). 3-methyl-2-oxobutanoate contacts are provided by residues 45–46 (DS), Asp84, and Lys112. Glu114 lines the Mg(2+) pocket. Glu180 (proton acceptor) is an active-site residue.

The protein belongs to the PanB family. As to quaternary structure, homodecamer; pentamer of dimers. Mg(2+) serves as cofactor.

The protein resides in the cytoplasm. It catalyses the reaction 3-methyl-2-oxobutanoate + (6R)-5,10-methylene-5,6,7,8-tetrahydrofolate + H2O = 2-dehydropantoate + (6S)-5,6,7,8-tetrahydrofolate. Its pathway is cofactor biosynthesis; (R)-pantothenate biosynthesis; (R)-pantoate from 3-methyl-2-oxobutanoate: step 1/2. In terms of biological role, catalyzes the reversible reaction in which hydroxymethyl group from 5,10-methylenetetrahydrofolate is transferred onto alpha-ketoisovalerate to form ketopantoate. This Salmonella arizonae (strain ATCC BAA-731 / CDC346-86 / RSK2980) protein is 3-methyl-2-oxobutanoate hydroxymethyltransferase.